Consider the following 471-residue polypeptide: MLRWGVMSENIMRIIDLRGQNLSRAELLAAMPRAAMGTSEATDLVRPILDDVKERGAAALRDFEEKFDHVRPKNLRVPVEAIKDALTTLDPEVRAAIEESVRRARAVAANQVPKDFYTDLAEGARVAERWIPIQRVGLYVPGGKAVYPSSVIMNAVPAQAAGVESLAIATPPARDNEEGLPNKTILATCAILGVDEVYAVGGAQAIAMFAYGAKGSEPQDGDILCDPVDKITGPGNIFVATAKSLVSAFVGIDAVAGPTEIGIIADETANPSLLAADLIGQAEHDELAGSVLFTDSTEIADKVQESLKYRVPRTEHAERVHTSLSGTQSAIVLTDGLDQSIDAANAYAAEHLEIQTKDADAVVKRIKNAGAIFRGPYSPVPLGDYMSGSNHVLPTGGTARFAAGLGVHTFMKPVEVIEYDEEGLKALAARINAFAVSEDLPAHGECVLSRFVKDPYDKATLREQEKEAGLR.

NAD(+) is bound by residues Tyr139, Gln204, and Asn236. Thr259, Gln281, and His284 together coordinate substrate. Zn(2+)-binding residues include Gln281 and His284. Active-site proton acceptor residues include Glu350 and His351. Substrate contacts are provided by His351, Asp384, Glu438, and His443. A Zn(2+)-binding site is contributed by Asp384. His443 lines the Zn(2+) pocket.

Belongs to the histidinol dehydrogenase family. Zn(2+) is required as a cofactor.

The enzyme catalyses L-histidinol + 2 NAD(+) + H2O = L-histidine + 2 NADH + 3 H(+). Its pathway is amino-acid biosynthesis; L-histidine biosynthesis; L-histidine from 5-phospho-alpha-D-ribose 1-diphosphate: step 9/9. In terms of biological role, catalyzes the sequential NAD-dependent oxidations of L-histidinol to L-histidinaldehyde and then to L-histidine. This Bifidobacterium longum (strain NCC 2705) protein is Histidinol dehydrogenase.